Reading from the N-terminus, the 358-residue chain is Phosphoribosyl pyrophosphate synthase-associated protein 2 (358 aa).

Belongs to the ribose-phosphate pyrophosphokinase family.

Seems to play a negative regulatory role in 5-phosphoribose 1-diphosphate synthesis. The polypeptide is Phosphoribosyl pyrophosphate synthase-associated protein 2 (prpsap2) (Xenopus tropicalis (Western clawed frog)).